The chain runs to 106 residues: UPF0145 protein VCM66_A0911 (106 aa).

It belongs to the UPF0145 family.

The protein is UPF0145 protein VCM66_A0911 of Vibrio cholerae serotype O1 (strain M66-2).